Reading from the N-terminus, the 577-residue chain is Efflux pump notK' (577 aa).

N62 and N84 each carry an N-linked (GlcNAc...) asparagine glycan. Transmembrane regions (helical) follow at residues 104-124, 151-171, 189-209, 241-261, and 265-285; these read AAIA…PVAL, LAVT…MLGI, AGIG…LGLV, NPTM…LMMY, and GAVI…TTPV. N-linked (GlcNAc...) asparagine glycosylation is present at N320. A run of 5 helical transmembrane segments spans residues 328 to 348, 373 to 393, 413 to 433, 434 to 454, and 476 to 496; these read FGLA…GTLY, VDAI…TAFV, GICF…PPWA, TGST…EINW, and IADG…GVWV. Over residues 555–566 the composition is skewed to low complexity; sequence MPPNGSMSSGSP. The disordered stretch occupies residues 555–577; it reads MPPNGSMSSGSPEQVAEKAVGKY. N-linked (GlcNAc...) asparagine glycosylation occurs at N558.

Belongs to the nucleobase:cation symporter-2 (NCS2) (TC 2.A.40) family. Azg-like subfamily.

It is found in the cell membrane. In terms of biological role, efflux pump; part of the gene cluster that mediates the biosynthesis of notoamide, a fungal indole alkaloid that belongs to a family of natural products containing a characteristic bicyclo[2.2.2]diazaoctane core. This chain is Efflux pump notK', found in Aspergillus versicolor.